We begin with the raw amino-acid sequence, 353 residues long: Phosphoribosylformylglycinamidine cyclo-ligase (353 aa).

Belongs to the AIR synthase family.

It is found in the cytoplasm. The enzyme catalyses 2-formamido-N(1)-(5-O-phospho-beta-D-ribosyl)acetamidine + ATP = 5-amino-1-(5-phospho-beta-D-ribosyl)imidazole + ADP + phosphate + H(+). The protein operates within purine metabolism; IMP biosynthesis via de novo pathway; 5-amino-1-(5-phospho-D-ribosyl)imidazole from N(2)-formyl-N(1)-(5-phospho-D-ribosyl)glycinamide: step 2/2. In Symbiobacterium thermophilum (strain DSM 24528 / JCM 14929 / IAM 14863 / T), this protein is Phosphoribosylformylglycinamidine cyclo-ligase.